Consider the following 1318-residue polypeptide: Uromodulin-like 1 (1318 aa).

The N-terminal stretch at 1 to 21 (MLRTSGLALLALVSAVGPSQA) is a signal peptide. The Extracellular segment spans residues 22 to 1272 (SGFTEKGLSL…HAEAGLGAGY (1251 aa)). An EMI domain is found at 33–106 (GYQLCSHRVT…YEQLGLYCVL (74 aa)). Cystine bridges form between C37–C94, C61–C70, and C93–C104. N89 is a glycosylation site (N-linked (GlcNAc...) asparagine). N-linked (GlcNAc...) asparagine glycosylation occurs at N109. The WAP domain occupies 114–158 (FTSRPGACPAEGPEPSTSPCSLDIDCPGLEKCCPWSGGRYCMAPA). A glycan (N-linked (GlcNAc...) asparagine) is linked at N172. In terms of domain architecture, EGF-like 1; calcium-binding spans 264–313 (DVNECFYEELNACSGRELCANLEGSYWCVCHQEAPATSPRKLNLEWEDCP). The Fibronectin type-III 1 domain occupies 314 to 398 (PVSDYVVLNV…TTLTIKTNAQ (85 aa)). N-linked (GlcNAc...) asparagine glycosylation is found at N322, N335, and N417. In terms of domain architecture, SEA 1 spans 396 to 510 (NAQVFEVTIK…QGTRVQDWDE (115 aa)). One can recognise an EGF-like 2; calcium-binding domain in the interval 507 to 552 (DWDECVDSAEHDCSPAAWCINLEGSYTCQCRTTRDATPSRAGRACE). Intrachain disulfides connect C511–C525, C519–C534, and C536–C551. A glycan (N-linked (GlcNAc...) asparagine) is linked at N585. Positions 593-655 (GYPQGTPAAG…PSPTEDPTGH (63 aa)) are disordered. One can recognise a Fibronectin type-III 2 domain in the interval 702–791 (VPVSIGRIMV…HLKVRTAARK (90 aa)). N713 carries N-linked (GlcNAc...) asparagine glycosylation. An SEA 2 domain is found at 788-900 (AARKLIGKVR…GDTFIQDYDE (113 aa)). The 42-residue stretch at 897-938 (DYDECERKEDDCVPGTSCRNTLGSFTCSCEGGAPDFPVEYSE) folds into the EGF-like 3; calcium-binding domain. 2 disulfide bridges follow: C901–C914 and C908–C923. The segment at 938-957 (ERPCEGDSPGNETWATSPER) is disordered. 2 N-linked (GlcNAc...) asparagine glycosylation sites follow: N984 and N1050. Residues 992 to 1235 (LCEIEKVVVA…ATCKINCNNF (244 aa)) enclose the ZP domain. C1157 and C1215 form a disulfide bridge. A helical transmembrane segment spans residues 1273-1293 (VVLIVVAIFVLVAGTATLLIV). Residues 1294 to 1318 (RYQRMNGRYNFKIQSNNFSYQVFYE) are Cytoplasmic-facing.

In terms of tissue distribution, isoform 4 is expressed at low level in kidney, testis and fetal thymus. Isoform 3 is expressed at low level in prostate, testis and fetal thymus.

The protein localises to the cell membrane. The protein resides in the cytoplasm. The sequence is that of Uromodulin-like 1 (UMODL1) from Homo sapiens (Human).